The chain runs to 216 residues: Alanyl-tRNA editing protein AlaX-M (216 aa).

3 residues coordinate Zn(2+): H99, H103, and C182.

It belongs to the class-II aminoacyl-tRNA synthetase family. Editing domain AlaX-M subfamily. In terms of assembly, monomer. Zn(2+) serves as cofactor.

It is found in the cytoplasm. Functions in trans to edit the amino acid moiety from mischarged charged Gly-tRNA(Ala) and Ser-tRNA(Ala). The polypeptide is Alanyl-tRNA editing protein AlaX-M (alaXM) (Pyrococcus horikoshii (strain ATCC 700860 / DSM 12428 / JCM 9974 / NBRC 100139 / OT-3)).